A 130-amino-acid chain; its full sequence is Mediator of RNA polymerase II transcription subunit 10 (130 aa).

This sequence belongs to the Mediator complex subunit 10 family. Component of the Mediator complex.

Its subcellular location is the nucleus. Its function is as follows. Component of the Mediator complex, a coactivator involved in the regulated transcription of nearly all RNA polymerase II-dependent genes. Mediator functions as a bridge to convey information from gene-specific regulatory proteins to the basal RNA polymerase II transcription machinery. Mediator is recruited to promoters by direct interactions with regulatory proteins and serves as a scaffold for the assembly of a functional preinitiation complex with RNA polymerase II and the general transcription factors. The polypeptide is Mediator of RNA polymerase II transcription subunit 10 (MED10) (Anopheles gambiae (African malaria mosquito)).